The sequence spans 253 residues: Imidazole glycerol phosphate synthase subunit HisF (253 aa).

Catalysis depends on residues D11 and D130.

Belongs to the HisA/HisF family. In terms of assembly, heterodimer of HisH and HisF.

It localises to the cytoplasm. The enzyme catalyses 5-[(5-phospho-1-deoxy-D-ribulos-1-ylimino)methylamino]-1-(5-phospho-beta-D-ribosyl)imidazole-4-carboxamide + L-glutamine = D-erythro-1-(imidazol-4-yl)glycerol 3-phosphate + 5-amino-1-(5-phospho-beta-D-ribosyl)imidazole-4-carboxamide + L-glutamate + H(+). It participates in amino-acid biosynthesis; L-histidine biosynthesis; L-histidine from 5-phospho-alpha-D-ribose 1-diphosphate: step 5/9. In terms of biological role, IGPS catalyzes the conversion of PRFAR and glutamine to IGP, AICAR and glutamate. The HisF subunit catalyzes the cyclization activity that produces IGP and AICAR from PRFAR using the ammonia provided by the HisH subunit. The chain is Imidazole glycerol phosphate synthase subunit HisF from Acidithiobacillus ferrooxidans (strain ATCC 23270 / DSM 14882 / CIP 104768 / NCIMB 8455) (Ferrobacillus ferrooxidans (strain ATCC 23270)).